We begin with the raw amino-acid sequence, 166 residues long: S-phase kinase-associated protein 1 homolog (166 aa).

An interaction with the F-box domain of F-box proteins region spans residues 105 to 166 (ILAANYLDIK…ENKWAEEATS (62 aa)).

Belongs to the SKP1 family. Component of multiple SCF (SKP1-CUL1-F-box) E3 ubiquitin-protein ligase complexes formed of CUL1, SKP1, RBX1 and a variable F-box domain-containing protein as substrate-specific subunit.

Its pathway is protein modification; protein ubiquitination. Essential component of the SCF (SKP1-CUL1-F-box protein) ubiquitin ligase complex, which mediates the ubiquitination of proteins involved in cell cycle progression, signal transduction and transcription. In the SCF complex, serves as an adapter that links the F-box protein to CUL1. The functional specificity of the SCF complex depends on the F-box protein as substrate recognition component. Its association with the holoenzyme telomerase ribonucleoprotein complex suggests that it may play a role in turnover of holoenzyme telomerase complex components. This chain is S-phase kinase-associated protein 1 homolog, found in Tetrahymena thermophila (strain SB210).